The chain runs to 172 residues: C-phycocyanin beta chain (172 aa).

(2R,3E)-phycocyanobilin contacts are provided by residues asparagine 35, aspartate 39, asparagine 72, arginine 77, cysteine 82, 82 to 88 (CLRDMEI), 149 to 151 (TIG), and cysteine 153. The residue at position 72 (asparagine 72) is an N4-methylasparagine.

It belongs to the phycobiliprotein family. In terms of assembly, heterodimer of an alpha and a beta subunit, which further assembles into trimers and the trimers into hexamers. The basic functional unit of phycobiliproteins is a ring-shaped hexamer formed from two back-to-back trimers contacting via the alpha chain subunits. The trimers are composed of alpha/beta subunit heterodimers arranged around a three-fold axis of symmetry. The phycoerythrins also contain a gamma subunit which is located in the center of the hexamer. In terms of processing, contains two covalently linked phycocyanobilin chromophores.

Its subcellular location is the plastid. The protein localises to the chloroplast thylakoid membrane. In terms of biological role, light-harvesting photosynthetic tetrapyrrole chromophore-protein from the phycobiliprotein complex (phycobilisome, PBS). Phycocyanin is the major phycobiliprotein in the PBS rod. The chain is C-phycocyanin beta chain (cpcB) from Cyanidium caldarium (Red alga).